We begin with the raw amino-acid sequence, 534 residues long: Transcription factor RBF1 (534 aa).

Positions M1–S36 are disordered. The stretch at A77–L147 forms a coiled coil. Disordered stretches follow at residues A262–E285, Q353–A372, Q402–L439, and T477–L534. A compositionally biased stretch (basic and acidic residues) spans N267 to E285. The stretch at H332–G386 forms a coiled coil. Residues Q402 to T435 show a composition bias toward low complexity.

The protein belongs to the RBF1 family.

Its subcellular location is the nucleus. The protein resides in the chromosome. It localises to the telomere. Transcriptional activator that binds to the RPG box and to telomeres. Involved in the regulation of the transition between yeast and filamentous forms and plays a role in virulence. Induces expression of HWP1, a major hyphal cell protein and virulence factor. This is Transcription factor RBF1 (RBF1) from Candida albicans (strain SC5314 / ATCC MYA-2876) (Yeast).